Consider the following 59-residue polypeptide: Large ribosomal subunit protein uL30 (59 aa).

This sequence belongs to the universal ribosomal protein uL30 family. Part of the 50S ribosomal subunit.

This is Large ribosomal subunit protein uL30 from Clostridium kluyveri (strain ATCC 8527 / DSM 555 / NBRC 12016 / NCIMB 10680 / K1).